The chain runs to 738 residues: Ethylene receptor (738 aa).

Transmembrane regions (helical) follow at residues 22-42 (ISDFFIAVAYFSIPIELVYFV), 53-73 (VLVQFGAFIVLCGATHLINLW), and 91-111 (VLTAVVSCATALMLVHIIPDL). Cu cation-binding residues include Cys-64 and His-68. The 149-residue stretch at 157 to 305 (DRHTILKTTL…VVADQVAVAL (149 aa)) folds into the GAF domain. Residues 348-585 (VMNHEMRTPM…TAIFIVKLGI (238 aa)) form the Histidine kinase domain. His-351 is subject to Phosphohistidine; by autocatalysis. The Response regulatory domain maps to 613–730 (KVLIMDDNGF…KMRSVLSELL (118 aa)). The residue at position 661 (Asp-661) is a 4-aspartylphosphate.

This sequence belongs to the ethylene receptor family. In terms of assembly, homodimer; disulfide-linked. The cofactor is Cu cation. Activation probably requires a transfer of a phosphate group between a His in the transmitter domain and an Asp of the receiver domain.

The protein resides in the endoplasmic reticulum membrane. The enzyme catalyses ATP + protein L-histidine = ADP + protein N-phospho-L-histidine.. May act early in the ethylene signal transduction pathway, possibly as an ethylene receptor, or as a regulator of the pathway. The chain is Ethylene receptor (ETR1) from Nicotiana tabacum (Common tobacco).